The chain runs to 519 residues: Chromobox protein homolog 2 (519 aa).

A Chromo domain is found at 12–70; it reads FAAECILSKRLRKGKLEYLVKWRGWSSKHNSWEPEENILDPRLLLAFQKKEHEKEVQNR. The segment covering 60–69 has biased composition (basic and acidic residues); the sequence is KKEHEKEVQN. Residues 60-180 form a disordered region; that stretch reads KKEHEKEVQN…PPEQKAARRP (121 aa). The span at 70-84 shows a compositional bias: basic residues; the sequence is RKRGKRPRGRPRKHT. Positions 75-87 form a DNA-binding region, a.T hook; it reads RPRGRPRKHTVTS. A compositionally biased stretch (low complexity) spans 103-119; the sequence is KSKSSSSSSSSTSSSSS. Basic and acidic residues predominate over residues 129 to 141; sequence LDSKRGPRGRETH. Glycyl lysine isopeptide (Lys-Gly) (interchain with G-Cter in SUMO2) cross-links involve residues K147 and K154. Positions 164-169 match the Nuclear localization signal motif; it reads KRGRKP. The residue at position 248 (R248) is an Asymmetric dimethylarginine; alternate. The residue at position 248 (R248) is an Omega-N-methylarginine; alternate. 2 disordered regions span residues 295-336 and 367-464; these read QKGG…LAPT and AIPA…TSLP. S303 bears the Phosphoserine mark. Composition is skewed to polar residues over residues 321-336 and 384-395; these read QRGN…LAPT and TGANMTNAPTDN. Low complexity predominate over residues 453–464; the sequence is SSDSDPDSTSLP.

As to quaternary structure, component of a PRC1-like complex. The composition of the PRC1 complex may differ between the PRC1 complex in pluripotent embryonic stem cells containing RNF2, CBX7 and PCGF2, and the PRC1 complex in differentiating cells containing RNF2, CBX2, CBX4 and BMI1. Interacts with RING1/RNF2. Interacts (via chromodomain) with histone H3K9Me3 and H3K27me3. May interact with H3C15 and H3C1. In terms of tissue distribution, expressed in embryoid bodies.

Its subcellular location is the nucleus speckle. The protein localises to the chromosome. Component of a Polycomb group (PcG) multiprotein PRC1-like complex, a complex class required to maintain the transcriptionally repressive state of many genes, including Hox genes, throughout development. PcG PRC1 complex acts via chromatin remodeling and modification of histones; it mediates monoubiquitination of histone H2A 'Lys-119', rendering chromatin heritably changed in its expressibility. Binds to histone H3 trimethylated at 'Lys-9' (H3K9me3) or at 'Lys-27' (H3K27me3). Plays a role in the lineage differentiation of the germ layers in embryonic development. Involved in sexual development, acting as activator of NR5A1 expression. The polypeptide is Chromobox protein homolog 2 (Cbx2) (Mus musculus (Mouse)).